The following is a 548-amino-acid chain: Probable malate:quinone oxidoreductase (548 aa).

Belongs to the MQO family. Requires FAD as cofactor.

It carries out the reaction (S)-malate + a quinone = a quinol + oxaloacetate. It participates in carbohydrate metabolism; tricarboxylic acid cycle; oxaloacetate from (S)-malate (quinone route): step 1/1. In Escherichia coli (strain SE11), this protein is Probable malate:quinone oxidoreductase.